A 375-amino-acid polypeptide reads, in one-letter code: Putative disease resistance protein At3g15700 (375 aa).

Residues 17–49 are a coiled coil; it reads KENDNVKKLKTATEELKDLRNIVMKRVKMYEDQ. Residues 158–372 enclose the NB-ARC domain; that stretch reads DNTGIIGLYG…LSTSPPNFSG (215 aa). Residue 167–174 coordinates ATP; sequence GVEGVGKT.

Potential disease resistance protein. This chain is Putative disease resistance protein At3g15700, found in Arabidopsis thaliana (Mouse-ear cress).